A 210-amino-acid polypeptide reads, in one-letter code: Dephospho-CoA kinase (210 aa).

One can recognise a DPCK domain in the interval 4-202 (WVGLTGGIGS…AFYSGIFASK (199 aa)). 12-17 (GSGKSA) contributes to the ATP binding site.

Belongs to the CoaE family.

It is found in the cytoplasm. The enzyme catalyses 3'-dephospho-CoA + ATP = ADP + CoA + H(+). It functions in the pathway cofactor biosynthesis; coenzyme A biosynthesis; CoA from (R)-pantothenate: step 5/5. Catalyzes the phosphorylation of the 3'-hydroxyl group of dephosphocoenzyme A to form coenzyme A. This is Dephospho-CoA kinase from Neisseria meningitidis serogroup B (strain ATCC BAA-335 / MC58).